The primary structure comprises 347 residues: Protein-glutamate methylesterase/protein-glutamine glutaminase (347 aa).

The region spanning 3 to 119 (EALVVDDSHF…STELSGHSEE (117 aa)) is the Response regulatory domain. Position 53 is a 4-aspartylphosphate (Asp53). Positions 132-154 (PTAGHDVEMEPASPPDATTSEYA) are disordered. Positions 152–346 (EYADNPTLLI…EAIADSIRRT (195 aa)) constitute a CheB-type methylesterase domain. Catalysis depends on residues Ser164, His191, and Asp288.

Belongs to the CheB family. In terms of processing, phosphorylated by CheA. Phosphorylation of the N-terminal regulatory domain activates the methylesterase activity.

It localises to the cytoplasm. The catalysed reaction is [protein]-L-glutamate 5-O-methyl ester + H2O = L-glutamyl-[protein] + methanol + H(+). It carries out the reaction L-glutaminyl-[protein] + H2O = L-glutamyl-[protein] + NH4(+). Involved in the modulation of the chemotaxis system; catalyzes the demethylation of specific methylglutamate residues introduced into the Htr transducer proteins (methyl-accepting chemotaxis proteins) by CheR. Also required for Htr deamidations, at least at a specific glutamine-glutamate pair in HTR-II and a specific aspartate-glutamine pair in Htr4. The sequence is that of Protein-glutamate methylesterase/protein-glutamine glutaminase from Halobacterium salinarum (strain ATCC 29341 / DSM 671 / R1).